Here is a 491-residue protein sequence, read N- to C-terminus: Proline--tRNA ligase (491 aa).

This sequence belongs to the class-II aminoacyl-tRNA synthetase family. ProS type 3 subfamily. Homodimer.

It is found in the cytoplasm. It carries out the reaction tRNA(Pro) + L-proline + ATP = L-prolyl-tRNA(Pro) + AMP + diphosphate. Functionally, catalyzes the attachment of proline to tRNA(Pro) in a two-step reaction: proline is first activated by ATP to form Pro-AMP and then transferred to the acceptor end of tRNA(Pro). The chain is Proline--tRNA ligase from Amoebophilus asiaticus (strain 5a2).